Here is a 143-residue protein sequence, read N- to C-terminus: Transcriptional regulator MraZ (143 aa).

SpoVT-AbrB domains follow at residues 5–47 and 76–119; these read EYSH…PMPV and AMEA…SDEN.

The protein belongs to the MraZ family. As to quaternary structure, forms oligomers.

It is found in the cytoplasm. It localises to the nucleoid. The chain is Transcriptional regulator MraZ from Leuconostoc citreum (strain KM20).